Consider the following 337-residue polypeptide: Heme A synthase (337 aa).

Helical transmembrane passes span 6 to 26 (ITKW…IGGI), 87 to 107 (FIHR…LIYF), 119 to 139 (LPYI…WYMV), 154 to 174 (LAFH…QLIK), and 192 to 212 (LIFS…GALV). Histidine 256 contacts heme. 3 helical membrane passes run 258-278 (LVGY…LKIE), 285-305 (IAYF…LTLL), and 308-328 (VPII…SIII). Histidine 316 is a heme binding site.

Belongs to the COX15/CtaA family. Type 2 subfamily. Interacts with CtaB. The cofactor is heme b.

Its subcellular location is the cell membrane. The catalysed reaction is Fe(II)-heme o + 2 A + H2O = Fe(II)-heme a + 2 AH2. Its pathway is porphyrin-containing compound metabolism; heme A biosynthesis; heme A from heme O: step 1/1. Catalyzes the conversion of heme O to heme A by two successive hydroxylations of the methyl group at C8. The first hydroxylation forms heme I, the second hydroxylation results in an unstable dihydroxymethyl group, which spontaneously dehydrates, resulting in the formyl group of heme A. The polypeptide is Heme A synthase (Rickettsia conorii (strain ATCC VR-613 / Malish 7)).